The sequence spans 119 residues: MVFILGVNFNEHKLVQKALESFYGLGQQASARILAKYSIHPRAKMGTLPPKIVTALTAELSTMTIENDARRLVLDNIKRLRDMGTYRGRRHAMGLPVRGQQTRNQIANARKLNKIERHG.

This sequence belongs to the universal ribosomal protein uS13 family. Component of the mitochondrial small ribosomal subunit (mt-SSU). Mature N.crassa 74S mitochondrial ribosomes consist of a small (37S) and a large (54S) subunit. The 37S small subunit contains a 16S ribosomal RNA (16S mt-rRNA) and 32 different proteins. The 54S large subunit contains a 23S rRNA (23S mt-rRNA) and 42 different proteins.

It localises to the mitochondrion. Its function is as follows. Component of the mitochondrial ribosome (mitoribosome), a dedicated translation machinery responsible for the synthesis of mitochondrial genome-encoded proteins, including at least some of the essential transmembrane subunits of the mitochondrial respiratory chain. The mitoribosomes are attached to the mitochondrial inner membrane and translation products are cotranslationally integrated into the membrane. In Neurospora crassa (strain ATCC 24698 / 74-OR23-1A / CBS 708.71 / DSM 1257 / FGSC 987), this protein is Small ribosomal subunit protein uS13m (sws2).